The primary structure comprises 297 residues: MPEIGAHVSAAGGPQRAPERGGEIGCDCMQLFTRNQRSWKVKPIAPGEADAFRRARAEHGIGAVMSHASYLINLAATDPEKHAKSQTALEAELERCHQLGIELLNFHPGAHLEAGIEAGIETIAATLNAICRNHPDKTDVCLVLENVAGQGSTVGADFAELAAILERLETPERFGVCVDTAHAFAAGYELHTAAGWDAMWAAFDDHIGLNRLVALHLNDSRPPCGSRKDRHALIGRGEIGPEAFRRAVTDPRTASLPQMLETPAGPEGWAQEIDWLRGCAQGNQPDLPEIEDRNINL.

The segment at 1 to 21 is disordered; the sequence is MPEIGAHVSAAGGPQRAPERG. The Zn(2+) site is built by His-67, His-107, Glu-145, Asp-179, His-182, His-216, Asp-229, His-231, and Glu-261.

This sequence belongs to the AP endonuclease 2 family. The cofactor is Zn(2+).

It catalyses the reaction Endonucleolytic cleavage to 5'-phosphooligonucleotide end-products.. Endonuclease IV plays a role in DNA repair. It cleaves phosphodiester bonds at apurinic or apyrimidinic (AP) sites, generating a 3'-hydroxyl group and a 5'-terminal sugar phosphate. The polypeptide is Probable endonuclease 4 (Halorhodospira halophila (strain DSM 244 / SL1) (Ectothiorhodospira halophila (strain DSM 244 / SL1))).